The chain runs to 204 residues: Small ribosomal subunit protein uS4 (204 aa).

The segment at 25–47 is disordered; the sequence is SPVNKREYGPGQHGQRRKKPSDY. An S4 RNA-binding domain is found at 93-156; the sequence is RRLDAVVYRM…KQFAFVMEAA (64 aa).

It belongs to the universal ribosomal protein uS4 family. As to quaternary structure, part of the 30S ribosomal subunit. Contacts protein S5. The interaction surface between S4 and S5 is involved in control of translational fidelity.

One of the primary rRNA binding proteins, it binds directly to 16S rRNA where it nucleates assembly of the body of the 30S subunit. Functionally, with S5 and S12 plays an important role in translational accuracy. The protein is Small ribosomal subunit protein uS4 of Rhodospirillum centenum (strain ATCC 51521 / SW).